The sequence spans 298 residues: Ketohexokinase (298 aa).

The beta-D-fructose site is built by Asp15, Gly41, Asn42, and Asn45. ATP contacts are provided by residues Arg108, 226–229 (AEEG), and 255–258 (GAGD). Asp258 contacts beta-D-fructose.

This sequence belongs to the carbohydrate kinase PfkB family. In terms of assembly, homodimer.

It carries out the reaction beta-D-fructose + ATP = beta-D-fructose 1-phosphate + ADP + H(+). The protein operates within carbohydrate metabolism; fructose metabolism. With respect to regulation, requires potassium. Inhibition by ADP. Its function is as follows. Catalyzes the phosphorylation of the ketose sugar fructose to fructose-1-phosphate. The protein is Ketohexokinase of Mus musculus (Mouse).